Here is a 314-residue protein sequence, read N- to C-terminus: tRNA dimethylallyltransferase (314 aa).

Residue 13 to 20 participates in ATP binding; it reads GPTAVGKT. 15-20 serves as a coordination point for substrate; that stretch reads TAVGKT. Residues 38-41 are interaction with substrate tRNA; sequence DSMQ.

It belongs to the IPP transferase family. As to quaternary structure, monomer. Mg(2+) is required as a cofactor.

It catalyses the reaction adenosine(37) in tRNA + dimethylallyl diphosphate = N(6)-dimethylallyladenosine(37) in tRNA + diphosphate. Functionally, catalyzes the transfer of a dimethylallyl group onto the adenine at position 37 in tRNAs that read codons beginning with uridine, leading to the formation of N6-(dimethylallyl)adenosine (i(6)A). This Bacillus subtilis (strain 168) protein is tRNA dimethylallyltransferase.